A 271-amino-acid chain; its full sequence is Aquaporin-2 (271 aa).

Topologically, residues 1-11 are cytoplasmic; sequence MWELRSIAFSR. The helical transmembrane segment at 12 to 32 threads the bilayer; the sequence is AVLAEFLATLLFVFFGLGSAL. Topologically, residues 33–40 are extracellular; the sequence is QWASSPPS. Residues 41 to 59 traverse the membrane as a helical segment; that stretch reads VLQIAVAFGLGIGILVQAL. Residues 60 to 64 are Cytoplasmic-facing; the sequence is GHVSG. The discontinuously helical intramembrane region spans 65–74; that stretch reads AHINPAVTVA. The NPA 1 signature appears at 68 to 70; the sequence is NPA. The Cytoplasmic segment spans residues 75-85; the sequence is CLVGCHVSFLR. The helical transmembrane segment at 86–107 threads the bilayer; that stretch reads AAFYVAAQLLGAVAGAAILHEI. Over 108–127 the chain is Extracellular; that stretch reads TPVEIRGDLAVNALHNNATA. Residue Asn-124 is glycosylated (N-linked (GlcNAc...) asparagine). The chain crosses the membrane as a helical span at residues 128–148; it reads GQAVTVELFLTMQLVLCIFAS. At 149 to 156 the chain is on the cytoplasmic side; the sequence is TDERRGDN. The chain crosses the membrane as a helical span at residues 157–176; it reads LGSPALSIGFSVTLGHLLGI. The Extracellular portion of the chain corresponds to 177–180; sequence YFTG. Positions 181–193 form an intramembrane region, discontinuously helical; it reads CSMNPARSLAPAV. The NPA 2 signature appears at 184 to 186; it reads NPA. The Extracellular portion of the chain corresponds to 194 to 201; sequence VTGKFDDH. Residues 202–222 form a helical membrane-spanning segment; that stretch reads WVFWIGPLVGAIIGSLLYNYL. The Cytoplasmic segment spans residues 223–271; it reads LFPSAKSLQERLAVLKGLEPDTDWEEREVRRRQSVELHSPQSLPRGSKA. Residues 251–271 are disordered; the sequence is VRRRQSVELHSPQSLPRGSKA. A phosphoserine mark is found at Ser-256, Ser-261, Ser-264, and Ser-269. The span at 261-271 shows a compositional bias: polar residues; it reads SPQSLPRGSKA.

Belongs to the MIP/aquaporin (TC 1.A.8) family. As to quaternary structure, homotetramer. Ser-256 phosphorylation is necessary and sufficient for expression at the apical membrane. Endocytosis is not phosphorylation-dependent. In terms of processing, N-glycosylated. In terms of tissue distribution, detected in kidney, in cortical and the medullary collecting tubules (at protein level). Detected in kidney medulla and cortex.

It is found in the apical cell membrane. Its subcellular location is the basolateral cell membrane. It localises to the cell membrane. The protein localises to the cytoplasmic vesicle membrane. The protein resides in the golgi apparatus. It is found in the trans-Golgi network membrane. It catalyses the reaction H2O(in) = H2O(out). It carries out the reaction glycerol(in) = glycerol(out). Its function is as follows. Forms a water-specific channel that provides the plasma membranes of renal collecting duct with high permeability to water, thereby permitting water to move in the direction of an osmotic gradient. Plays an essential role in renal water homeostasis. Could also be permeable to glycerol. The sequence is that of Aquaporin-2 from Rattus norvegicus (Rat).